The sequence spans 984 residues: Valine--tRNA ligase (984 aa).

Residues 65–75 (PNVTGSLHMGH) carry the 'HIGH' region motif. Residues 579–583 (KMSKS) carry the 'KMSKS' region motif. ATP is bound at residue Lys-582. The stretch at 954 to 984 (VEVVDAEKAKLAELEGQLTAMTAQMEELKNL) forms a coiled coil.

Belongs to the class-I aminoacyl-tRNA synthetase family. ValS type 1 subfamily. In terms of assembly, monomer.

The protein resides in the cytoplasm. The catalysed reaction is tRNA(Val) + L-valine + ATP = L-valyl-tRNA(Val) + AMP + diphosphate. In terms of biological role, catalyzes the attachment of valine to tRNA(Val). As ValRS can inadvertently accommodate and process structurally similar amino acids such as threonine, to avoid such errors, it has a 'posttransfer' editing activity that hydrolyzes mischarged Thr-tRNA(Val) in a tRNA-dependent manner. The protein is Valine--tRNA ligase of Psychrobacter arcticus (strain DSM 17307 / VKM B-2377 / 273-4).